A 104-amino-acid polypeptide reads, in one-letter code: Elicitor peptide 6 (104 aa).

Residues 1 to 81 (MEVNGEEERR…TVEETGFMAR (81 aa)) constitute a propeptide that is removed on maturation. Low complexity predominate over residues 48-61 (SSSIPPSSSSSSPS). Residues 48–104 (SSSIPPSSSSSSPSLVEEEDSGTETVEETGFMARITAVLRRRPRPPPYSSGRPGQNN) form a disordered region. Positions 63 to 74 (VEEEDSGTETVE) are enriched in acidic residues.

This sequence belongs to the brassicaceae elicitor peptide family.

In terms of biological role, elicitor of plant defense. The sequence is that of Elicitor peptide 6 (PEP6) from Arabidopsis thaliana (Mouse-ear cress).